Here is a 710-residue protein sequence, read N- to C-terminus: Tudor domain-containing protein 3 (710 aa).

3 disordered regions span residues 206-227, 288-328, and 369-515; these read KTFG…GSRN, LTGN…SAPS, and KDYN…SEFY. The UBA domain maps to 250–290; that stretch reads LVDEKALRHITEMGFSKDAARQALMDHSNNVEAALNSLLTG. Basic and acidic residues-rich tracts occupy residues 370–400 and 431–451; these read DYNH…RFQK and MEER…KDFS. A compositionally biased stretch (polar residues) spans 453-471; that stretch reads LPSSHQNEGSYKKSYTNPM. 2 stretches are compositionally biased toward basic and acidic residues: residues 480-490 and 504-515; these read NHTEVKEEFHH and KKDDQRYNSEFY. Positions 617–677 constitute a Tudor domain; sequence SWRPGDECLA…RPIQAEAWEE (61 aa). The tract at residues 678–710 is disordered; that stretch reads EGDFGDFRRGGDGQPRRSTRPTQQFYQPPRARN. The segment covering 682 to 692 has biased composition (basic and acidic residues); that stretch reads GDFRRGGDGQP.

In terms of assembly, component of mRNA stress granules.

It localises to the cytoplasm. The protein resides in the nucleus. In terms of biological role, scaffolding protein that specifically recognizes and binds dimethylarginine-containing proteins. Plays a role in the regulation of translation of target mRNAs by binding Arg/Gly-rich motifs (GAR) in dimethylarginine-containing proteins. In nucleus, acts as a coactivator: recognizes and binds asymmetric dimethylation on the core histone tails associated with transcriptional activation (H3R17me2a and H4R3me2a) and recruits proteins at these arginine-methylated loci. In cytoplasm, acts as an antiviral factor that participates in the assembly of stress granules together with G3BP1. This is Tudor domain-containing protein 3 (tdrd3) from Xenopus tropicalis (Western clawed frog).